The chain runs to 259 residues: Phosphatidylserine decarboxylase proenzyme (259 aa).

Catalysis depends on charge relay system; for autoendoproteolytic cleavage activity residues D86, H142, and S226. S226 serves as the catalytic Schiff-base intermediate with substrate; via pyruvic acid; for decarboxylase activity. At S226 the chain carries Pyruvic acid (Ser); by autocatalysis.

The protein belongs to the phosphatidylserine decarboxylase family. PSD-B subfamily. Prokaryotic type I sub-subfamily. Heterodimer of a large membrane-associated beta subunit and a small pyruvoyl-containing alpha subunit. Pyruvate serves as cofactor. Post-translationally, is synthesized initially as an inactive proenzyme. Formation of the active enzyme involves a self-maturation process in which the active site pyruvoyl group is generated from an internal serine residue via an autocatalytic post-translational modification. Two non-identical subunits are generated from the proenzyme in this reaction, and the pyruvate is formed at the N-terminus of the alpha chain, which is derived from the carboxyl end of the proenzyme. The autoendoproteolytic cleavage occurs by a canonical serine protease mechanism, in which the side chain hydroxyl group of the serine supplies its oxygen atom to form the C-terminus of the beta chain, while the remainder of the serine residue undergoes an oxidative deamination to produce ammonia and the pyruvoyl prosthetic group on the alpha chain. During this reaction, the Ser that is part of the protease active site of the proenzyme becomes the pyruvoyl prosthetic group, which constitutes an essential element of the active site of the mature decarboxylase.

It is found in the cell membrane. It carries out the reaction a 1,2-diacyl-sn-glycero-3-phospho-L-serine + H(+) = a 1,2-diacyl-sn-glycero-3-phosphoethanolamine + CO2. Its pathway is phospholipid metabolism; phosphatidylethanolamine biosynthesis; phosphatidylethanolamine from CDP-diacylglycerol: step 2/2. Catalyzes the formation of phosphatidylethanolamine (PtdEtn) from phosphatidylserine (PtdSer). The polypeptide is Phosphatidylserine decarboxylase proenzyme (Geobacillus sp. (strain WCH70)).